The chain runs to 82 residues: MDPQIASASVLAAALAIGLAAIGPGIGQGNASGQAVEGIARQPEAEGKIRGTLLLTLAFMESLTIYGLVIALVLLFANPFAG.

2 helical membrane-spanning segments follow: residues 5–25 and 57–77; these read IASA…IGPG and LAFM…LLFA.

This sequence belongs to the ATPase C chain family. F-type ATPases have 2 components, F(1) - the catalytic core - and F(0) - the membrane proton channel. F(1) has five subunits: alpha(3), beta(3), gamma(1), delta(1), epsilon(1). F(0) has four main subunits: a(1), b(1), b'(1) and c(10-14). The alpha and beta chains form an alternating ring which encloses part of the gamma chain. F(1) is attached to F(0) by a central stalk formed by the gamma and epsilon chains, while a peripheral stalk is formed by the delta, b and b' chains.

The protein localises to the cellular thylakoid membrane. F(1)F(0) ATP synthase produces ATP from ADP in the presence of a proton or sodium gradient. F-type ATPases consist of two structural domains, F(1) containing the extramembraneous catalytic core and F(0) containing the membrane proton channel, linked together by a central stalk and a peripheral stalk. During catalysis, ATP synthesis in the catalytic domain of F(1) is coupled via a rotary mechanism of the central stalk subunits to proton translocation. In terms of biological role, key component of the F(0) channel; it plays a direct role in translocation across the membrane. A homomeric c-ring of between 10-14 subunits forms the central stalk rotor element with the F(1) delta and epsilon subunits. The polypeptide is ATP synthase subunit c (Cyanothece sp. (strain PCC 7425 / ATCC 29141)).